An 867-amino-acid chain; its full sequence is Bifunctional diterpene synthase, chloroplastic (867 aa).

The N-terminal 55 residues, 1-55, are a transit peptide targeting the chloroplast; the sequence is MAKVLFSSFQQTGISGSLKSGQLSGVFINGTNLKSNAHAKRFRKNSTSSITIRCC. Position 255 (K255) interacts with substrate. Residues D389 and D391 each contribute to the Mg(2+) site. Residues 389–392 carry the DXDD motif motif; sequence DIDD. Residue K474 participates in substrate binding. Residues D611, D615, N758, T762, and E766 each coordinate Mg(2+). Positions 611-615 match the DDXXD motif motif; sequence DDLMD.

It belongs to the terpene synthase family. It depends on Mg(2+) as a cofactor.

The protein resides in the plastid. The protein localises to the chloroplast. It catalyses the reaction (+)-copalyl diphosphate = miltiradiene + diphosphate. It carries out the reaction (2E,6E,10E)-geranylgeranyl diphosphate = (+)-copalyl diphosphate. Its pathway is secondary metabolite biosynthesis; terpenoid biosynthesis. Functionally, bifunctional diterpene cyclase that catalyzes the successive two-step type-B (protonation-initiated cyclization) and type-A (ionization-initiated cyclization) reactions of geranylgeranyl diphosphate (GGDP) producing successively (+)-copalyl diphosphate and miltiradiene. This chain is Bifunctional diterpene synthase, chloroplastic (MDS), found in Selaginella moellendorffii (Spikemoss).